The following is a 248-amino-acid chain: tRNA (guanine-N(1)-)-methyltransferase (248 aa).

S-adenosyl-L-methionine contacts are provided by residues glycine 113 and 133 to 138 (IGDYVL).

It belongs to the RNA methyltransferase TrmD family. As to quaternary structure, homodimer.

The protein resides in the cytoplasm. The catalysed reaction is guanosine(37) in tRNA + S-adenosyl-L-methionine = N(1)-methylguanosine(37) in tRNA + S-adenosyl-L-homocysteine + H(+). In terms of biological role, specifically methylates guanosine-37 in various tRNAs. The protein is tRNA (guanine-N(1)-)-methyltransferase of Shewanella halifaxensis (strain HAW-EB4).